A 580-amino-acid polypeptide reads, in one-letter code: Laccase-6 (580 aa).

The signal sequence occupies residues 1–22; it reads MSCSWMIPVFAILAFVASAAQA. 2 Plastocyanin-like domains span residues 30–148 and 158–317; these read NVAT…PRRA and EEKT…YVDA. Residues Asn44 and Asn78 are each glycosylated (N-linked (GlcNAc...) asparagine). Positions 82, 84, 127, and 129 each coordinate Cu cation. N-linked (GlcNAc...) asparagine glycosylation is found at Asn306, Asn335, Asn385, Asn397, and Asn462. One can recognise a Plastocyanin-like 3 domain in the interval 424 to 564; the sequence is DFPDQPPVAF…AMVFEVESGP (141 aa). Positions 480, 483, 485, 543, 544, 545, and 549 each coordinate Cu cation.

This sequence belongs to the multicopper oxidase family. It depends on Cu cation as a cofactor.

The protein resides in the secreted. The protein localises to the extracellular space. It is found in the apoplast. The catalysed reaction is 4 hydroquinone + O2 = 4 benzosemiquinone + 2 H2O. Functionally, lignin degradation and detoxification of lignin-derived products. The polypeptide is Laccase-6 (LAC6) (Oryza sativa subsp. japonica (Rice)).